A 680-amino-acid chain; its full sequence is tRNA 5-methylaminomethyl-2-thiouridine biosynthesis bifunctional protein MnmC (680 aa).

The interval 1–251 is tRNA (mnm(5)s(2)U34)-methyltransferase; sequence MSQNHILPQN…KREMIAGTLT (251 aa). An FAD-dependent cmnm(5)s(2)U34 oxidoreductase region spans residues 277–680; the sequence is IGGGVASAAL…RLLKGKPLDI (404 aa).

This sequence in the N-terminal section; belongs to the methyltransferase superfamily. tRNA (mnm(5)s(2)U34)-methyltransferase family. It in the C-terminal section; belongs to the DAO family. It depends on FAD as a cofactor.

Its subcellular location is the cytoplasm. It catalyses the reaction 5-aminomethyl-2-thiouridine(34) in tRNA + S-adenosyl-L-methionine = 5-methylaminomethyl-2-thiouridine(34) in tRNA + S-adenosyl-L-homocysteine + H(+). Its function is as follows. Catalyzes the last two steps in the biosynthesis of 5-methylaminomethyl-2-thiouridine (mnm(5)s(2)U) at the wobble position (U34) in tRNA. Catalyzes the FAD-dependent demodification of cmnm(5)s(2)U34 to nm(5)s(2)U34, followed by the transfer of a methyl group from S-adenosyl-L-methionine to nm(5)s(2)U34, to form mnm(5)s(2)U34. The chain is tRNA 5-methylaminomethyl-2-thiouridine biosynthesis bifunctional protein MnmC from Aliivibrio fischeri (strain ATCC 700601 / ES114) (Vibrio fischeri).